The sequence spans 118 residues: MRHKNGYRKLGRTSSHRAALLKNLTIAIVKNGKIETTLEKAKELRSYVEKLITRARKGDFNAHKFVFAALQDKEATNMLVNEVAPKFATKNGGYTRIIKTRTRRGDAAEMAYIELINE.

It belongs to the bacterial ribosomal protein bL17 family. Part of the 50S ribosomal subunit. Contacts protein L32.

This is Large ribosomal subunit protein bL17 from Campylobacter hominis (strain ATCC BAA-381 / DSM 21671 / CCUG 45161 / LMG 19568 / NCTC 13146 / CH001A).